Reading from the N-terminus, the 291-residue chain is Bifunctional protein FolD (291 aa).

NADP(+)-binding positions include 167–169, Ser-192, and Ile-233; that span reads GRS.

This sequence belongs to the tetrahydrofolate dehydrogenase/cyclohydrolase family. As to quaternary structure, homodimer.

The catalysed reaction is (6R)-5,10-methylene-5,6,7,8-tetrahydrofolate + NADP(+) = (6R)-5,10-methenyltetrahydrofolate + NADPH. The enzyme catalyses (6R)-5,10-methenyltetrahydrofolate + H2O = (6R)-10-formyltetrahydrofolate + H(+). It participates in one-carbon metabolism; tetrahydrofolate interconversion. Its function is as follows. Catalyzes the oxidation of 5,10-methylenetetrahydrofolate to 5,10-methenyltetrahydrofolate and then the hydrolysis of 5,10-methenyltetrahydrofolate to 10-formyltetrahydrofolate. This Dichelobacter nodosus (strain VCS1703A) protein is Bifunctional protein FolD.